The chain runs to 298 residues: Protoheme IX farnesyltransferase (298 aa).

9 helical membrane-spanning segments follow: residues 26 to 46 (VVSLIVFTAVIGMFLSVPGVV), 52 to 72 (IFATVGIAFVAGAAAAVNCLV), 99 to 119 (FVFLALVGGAGLLILHQLVNP), 120 to 140 (LTMWLTLGTFVGYAIIYTVIL), 148 to 168 (IVIGGASGAMPPVLGWAAVTG), 174 to 194 (ALLLFLIIFAWTPPHFWALAL), 219 to 239 (LHVLLYTLILIAVTLMPYATQ), 241 to 261 (SGLIYLAGAIVLDVIFLYYAV), and 276 to 296 (FRYSILYLAGLFAVLLVDHYI).

This sequence belongs to the UbiA prenyltransferase family. Protoheme IX farnesyltransferase subfamily.

Its subcellular location is the cell inner membrane. It carries out the reaction heme b + (2E,6E)-farnesyl diphosphate + H2O = Fe(II)-heme o + diphosphate. It functions in the pathway porphyrin-containing compound metabolism; heme O biosynthesis; heme O from protoheme: step 1/1. Functionally, converts heme B (protoheme IX) to heme O by substitution of the vinyl group on carbon 2 of heme B porphyrin ring with a hydroxyethyl farnesyl side group. The chain is Protoheme IX farnesyltransferase from Nitrosospira multiformis (strain ATCC 25196 / NCIMB 11849 / C 71).